The chain runs to 64 residues: Bowman-Birk type trypsin inhibitor TI1 (64 aa).

5 disulfide bridges follow: Cys9–Cys61, Cys10–Cys25, Cys15–Cys23, Cys32–Cys39, and Cys36–Cys49.

This sequence belongs to the Bowman-Birk serine protease inhibitor family.

This chain is Bowman-Birk type trypsin inhibitor TI1, found in Coix lacryma-jobi (Job's tears).